A 162-amino-acid chain; its full sequence is UPF0178 protein Rsph17029_2512 (162 aa).

It belongs to the UPF0178 family.

The polypeptide is UPF0178 protein Rsph17029_2512 (Cereibacter sphaeroides (strain ATCC 17029 / ATH 2.4.9) (Rhodobacter sphaeroides)).